Consider the following 148-residue polypeptide: UPF0260 protein KPK_1978 (148 aa).

This sequence belongs to the UPF0260 family.

In Klebsiella pneumoniae (strain 342), this protein is UPF0260 protein KPK_1978.